A 230-amino-acid polypeptide reads, in one-letter code: Phosphoribosylaminoimidazole-succinocarboxamide synthase (230 aa).

The protein belongs to the SAICAR synthetase family.

It carries out the reaction 5-amino-1-(5-phospho-D-ribosyl)imidazole-4-carboxylate + L-aspartate + ATP = (2S)-2-[5-amino-1-(5-phospho-beta-D-ribosyl)imidazole-4-carboxamido]succinate + ADP + phosphate + 2 H(+). It participates in purine metabolism; IMP biosynthesis via de novo pathway; 5-amino-1-(5-phospho-D-ribosyl)imidazole-4-carboxamide from 5-amino-1-(5-phospho-D-ribosyl)imidazole-4-carboxylate: step 1/2. The protein is Phosphoribosylaminoimidazole-succinocarboxamide synthase of Thermotoga sp. (strain RQ2).